We begin with the raw amino-acid sequence, 110 residues long: Iron-sulfur cluster assembly protein CyaY (110 aa).

It belongs to the frataxin family.

In terms of biological role, involved in iron-sulfur (Fe-S) cluster assembly. May act as a regulator of Fe-S biogenesis. The sequence is that of Iron-sulfur cluster assembly protein CyaY from Pseudomonas putida (strain W619).